Here is a 191-residue protein sequence, read N- to C-terminus: Putative 3-methyladenine DNA glycosylase (191 aa).

It belongs to the DNA glycosylase MPG family.

The protein is Putative 3-methyladenine DNA glycosylase of Carboxydothermus hydrogenoformans (strain ATCC BAA-161 / DSM 6008 / Z-2901).